Here is a 356-residue protein sequence, read N- to C-terminus: Caspase activity and apoptosis inhibitor 1 (356 aa).

Residues 1–14 (MTGKKSSREKRRKR) show a composition bias toward basic residues. 2 disordered regions span residues 1-24 (MTGKKSSREKRRKRSGQEAAASLA) and 54-80 (VAGGAERSERRKRRSTDSSSSVSGSLQ). Ser68 carries the post-translational modification Phosphoserine. Thr69 carries the post-translational modification Phosphothreonine. Residue Lys84 forms a Glycyl lysine isopeptide (Lys-Gly) (interchain with G-Cter in SUMO2) linkage. 2 positions are modified to phosphoserine: Ser100 and Ser183. The interval 208–234 (DSTSSLRENKQPEVLESKQGKGEDSDV) is disordered. Over residues 214-231 (RENKQPEVLESKQGKGED) the composition is skewed to basic and acidic residues. The stretch at 276–306 (ENTVQSEAGQIDDLERDIEKSVNEILGLAES) forms a coiled coil. Ser307 carries the phosphoserine modification.

Its function is as follows. Anti-apoptotic protein that modulates a caspase-10 dependent mitochondrial caspase-3/9 feedback amplification loop. The protein is Caspase activity and apoptosis inhibitor 1 (Caap1) of Mus musculus (Mouse).